The sequence spans 35 residues: Cecropin-B (35 aa).

Residue leucine 35 is modified to Leucine amide.

Belongs to the cecropin family.

The protein resides in the secreted. Its function is as follows. Cecropins have lytic and antibacterial activity against several Gram-positive and Gram-negative bacteria. This chain is Cecropin-B, found in Antheraea pernyi (Chinese oak silk moth).